Here is a 440-residue protein sequence, read N- to C-terminus: Putative epoxide hydrolase (440 aa).

Positions 1–21 (MTKTLAEQPGEGAAPVSPSPS) are disordered. Positions 1–49 (MTKTLAEQPGEGAAPVSPSPSRRALLHGAAGLGALAAGAAVAGPGLAFA) form a signal peptide, tat-type signal.

This sequence belongs to the peptidase S33 family. In terms of processing, predicted to be exported by the Tat system. The position of the signal peptide cleavage has not been experimentally proven.

The enzyme catalyses an epoxide + H2O = an ethanediol. This chain is Putative epoxide hydrolase, found in Stigmatella aurantiaca (strain DW4/3-1).